We begin with the raw amino-acid sequence, 363 residues long: 3-dehydroquinate synthase (363 aa).

Residues 103 to 107 (GAVGD), 127 to 128 (TT), Lys139, Lys148, and 166 to 169 (FSET) contribute to the NAD(+) site. Zn(2+) contacts are provided by Glu181, His243, and His260.

This sequence belongs to the sugar phosphate cyclases superfamily. Dehydroquinate synthase family. Requires Co(2+) as cofactor. It depends on Zn(2+) as a cofactor. The cofactor is NAD(+).

It localises to the cytoplasm. It catalyses the reaction 7-phospho-2-dehydro-3-deoxy-D-arabino-heptonate = 3-dehydroquinate + phosphate. Its pathway is metabolic intermediate biosynthesis; chorismate biosynthesis; chorismate from D-erythrose 4-phosphate and phosphoenolpyruvate: step 2/7. Functionally, catalyzes the conversion of 3-deoxy-D-arabino-heptulosonate 7-phosphate (DAHP) to dehydroquinate (DHQ). The chain is 3-dehydroquinate synthase from Lysinibacillus sphaericus (strain C3-41).